The following is a 503-amino-acid chain: Secreted RxLR effector protein RXLR-C08 (503 aa).

The signal sequence occupies residues 1–22; the sequence is MRLCGVASAFLSTLILIAHIDA. N-linked (GlcNAc...) asparagine glycosylation is found at asparagine 27, asparagine 35, and asparagine 45. Positions 57–60 match the dEER motif; the sequence is DEER. N-linked (GlcNAc...) asparagine glycans are attached at residues asparagine 108, asparagine 197, and asparagine 374.

This sequence belongs to the RxLR effector family.

It localises to the secreted. The protein resides in the host Golgi apparatus. In terms of biological role, secreted effector that suppresses pattern-triggered immunity (PTI) in plant host. In Plasmopara halstedii (Downy mildew of sunflower), this protein is Secreted RxLR effector protein RXLR-C08.